The following is a 387-amino-acid chain: Peroxisomal membrane protein LPX1 (387 aa).

Residues glutamine 385–leucine 387 form a peroxisomal targeting signal type 1 region.

The protein resides in the peroxisome matrix. Has acyl esterase, lipase and phospholipase A activity. This is Peroxisomal membrane protein LPX1 (LPX1) from Saccharomyces cerevisiae (strain ATCC 204508 / S288c) (Baker's yeast).